Reading from the N-terminus, the 119-residue chain is Autophagy-related protein 8C-like (119 aa).

Residue Gly117 is the site of Phosphatidylethanolamine amidated glycine attachment. Residues 118-119 (SF) constitute a propeptide, removed in mature form.

It belongs to the ATG8 family. Interacts with ATG4. Interacts with the Phytophtora infestans effector PexRD54. Interacts with JOKA2. Post-translationally, the C-terminal 2 residues are removed by ATG4 to expose Gly-117 at the C-terminus. The C-terminal Gly is then amidated with phosphatidylethanolamine by an activating system similar to that for ubiquitin. The phosphatidylethanolamine amidated glycine is required for autophagosome formation.

It is found in the cytoplasmic vesicle. Its subcellular location is the autophagosome membrane. It localises to the vacuole membrane. The protein localises to the cytoplasm. The protein resides in the cytoskeleton. Its function is as follows. Ubiquitin-like modifier involved in autophagosomes formation. May mediate the delivery of the autophagosomes to the vacuole via the microtubule cytoskeleton. ATG8CL-mediated selective autophagy contributes to defense against the fungal pathogen Phytophtora infestans. This Solanum tuberosum (Potato) protein is Autophagy-related protein 8C-like.